Reading from the N-terminus, the 273-residue chain is Transmembrane protein 45A (273 aa).

5 consecutive transmembrane segments (helical) span residues 8 to 27 (ALPGSFFFAMGFWWTMKNIL), 55 to 79 (VVVLLMSLTGIAGEQFISGGPALIL), 108 to 131 (IICFTTNVLPLSSSKLMLSIAIFV), 153 to 171 (LLVFVGTFSGLVAFLEFLV), and 217 to 236 (MFLSMCFCWHYASILILIGV).

The protein belongs to the TMEM45 family.

The protein localises to the membrane. This chain is Transmembrane protein 45A (Tmem45a), found in Mus musculus (Mouse).